A 169-amino-acid chain; its full sequence is GTP-dependent dephospho-CoA kinase (169 aa).

Residues D45, D64, and E121 each contribute to the GTP site.

It belongs to the GTP-dependent DPCK family.

It catalyses the reaction 3'-dephospho-CoA + GTP = GDP + CoA + H(+). Its pathway is cofactor biosynthesis; coenzyme A biosynthesis. Catalyzes the GTP-dependent phosphorylation of the 3'-hydroxyl group of dephosphocoenzyme A to form coenzyme A (CoA). The polypeptide is GTP-dependent dephospho-CoA kinase (Methanobrevibacter smithii (strain ATCC 35061 / DSM 861 / OCM 144 / PS)).